The chain runs to 958 residues: Valine--tRNA ligase (958 aa).

The 'HIGH' region signature appears at 42–52 (PNVTGSLHMGH). A 'KMSKS' region motif is present at residues 554–558 (KMSKS). Lys557 is an ATP binding site. The stretch at 887 to 956 (LVDVAAEMAR…TEQKAEFAKL (70 aa)) forms a coiled coil.

Belongs to the class-I aminoacyl-tRNA synthetase family. ValS type 1 subfamily. In terms of assembly, monomer.

It is found in the cytoplasm. It carries out the reaction tRNA(Val) + L-valine + ATP = L-valyl-tRNA(Val) + AMP + diphosphate. In terms of biological role, catalyzes the attachment of valine to tRNA(Val). As ValRS can inadvertently accommodate and process structurally similar amino acids such as threonine, to avoid such errors, it has a 'posttransfer' editing activity that hydrolyzes mischarged Thr-tRNA(Val) in a tRNA-dependent manner. This is Valine--tRNA ligase from Shewanella oneidensis (strain ATCC 700550 / JCM 31522 / CIP 106686 / LMG 19005 / NCIMB 14063 / MR-1).